We begin with the raw amino-acid sequence, 307 residues long: tRNA dimethylallyltransferase (307 aa).

10–17 (GPTASGKS) provides a ligand contact to ATP. 12–17 (TASGKS) lines the substrate pocket. 2 interaction with substrate tRNA regions span residues 35–38 (DSMQ) and 159–163 (QRLCR).

This sequence belongs to the IPP transferase family. As to quaternary structure, monomer. It depends on Mg(2+) as a cofactor.

It carries out the reaction adenosine(37) in tRNA + dimethylallyl diphosphate = N(6)-dimethylallyladenosine(37) in tRNA + diphosphate. Its function is as follows. Catalyzes the transfer of a dimethylallyl group onto the adenine at position 37 in tRNAs that read codons beginning with uridine, leading to the formation of N6-(dimethylallyl)adenosine (i(6)A). The protein is tRNA dimethylallyltransferase of Phenylobacterium zucineum (strain HLK1).